We begin with the raw amino-acid sequence, 545 residues long: O-phosphoserine--tRNA(Cys) ligase (545 aa).

Residues 189–191 (HMT), 234–236 (SAS), 276–277 (YY), and asparagine 328 contribute to the substrate site.

Belongs to the class-II aminoacyl-tRNA synthetase family. O-phosphoseryl-tRNA(Cys) synthetase subfamily. As to quaternary structure, homotetramer. Interacts with SepCysS.

The catalysed reaction is tRNA(Cys) + O-phospho-L-serine + ATP = O-phospho-L-seryl-tRNA(Cys) + AMP + diphosphate. Catalyzes the attachment of O-phosphoserine (Sep) to tRNA(Cys). This chain is O-phosphoserine--tRNA(Cys) ligase, found in Methanothrix thermoacetophila (strain DSM 6194 / JCM 14653 / NBRC 101360 / PT) (Methanosaeta thermophila).